The following is an 89-amino-acid chain: Small ribosomal subunit protein uS15 (89 aa).

Belongs to the universal ribosomal protein uS15 family. As to quaternary structure, part of the 30S ribosomal subunit. Forms a bridge to the 50S subunit in the 70S ribosome, contacting the 23S rRNA.

In terms of biological role, one of the primary rRNA binding proteins, it binds directly to 16S rRNA where it helps nucleate assembly of the platform of the 30S subunit by binding and bridging several RNA helices of the 16S rRNA. Functionally, forms an intersubunit bridge (bridge B4) with the 23S rRNA of the 50S subunit in the ribosome. The chain is Small ribosomal subunit protein uS15 from Saccharophagus degradans (strain 2-40 / ATCC 43961 / DSM 17024).